Here is a 140-residue protein sequence, read N- to C-terminus: Large ribosomal subunit protein uL11 (140 aa).

Belongs to the universal ribosomal protein uL11 family. In terms of assembly, part of the ribosomal stalk of the 50S ribosomal subunit. Interacts with L10 and the large rRNA to form the base of the stalk. L10 forms an elongated spine to which L12 dimers bind in a sequential fashion forming a multimeric L10(L12)X complex. One or more lysine residues are methylated.

Its function is as follows. Forms part of the ribosomal stalk which helps the ribosome interact with GTP-bound translation factors. This is Large ribosomal subunit protein uL11 from Campylobacter hominis (strain ATCC BAA-381 / DSM 21671 / CCUG 45161 / LMG 19568 / NCTC 13146 / CH001A).